The primary structure comprises 277 residues: Bifunctional protein FolD (277 aa).

NADP(+) is bound by residues 160 to 162 (GAS), Ser-185, and Ile-226.

Belongs to the tetrahydrofolate dehydrogenase/cyclohydrolase family. Homodimer.

It carries out the reaction (6R)-5,10-methylene-5,6,7,8-tetrahydrofolate + NADP(+) = (6R)-5,10-methenyltetrahydrofolate + NADPH. It catalyses the reaction (6R)-5,10-methenyltetrahydrofolate + H2O = (6R)-10-formyltetrahydrofolate + H(+). It functions in the pathway one-carbon metabolism; tetrahydrofolate interconversion. Catalyzes the oxidation of 5,10-methylenetetrahydrofolate to 5,10-methenyltetrahydrofolate and then the hydrolysis of 5,10-methenyltetrahydrofolate to 10-formyltetrahydrofolate. This Vesicomyosocius okutanii subsp. Calyptogena okutanii (strain HA) protein is Bifunctional protein FolD.